Consider the following 21-residue polypeptide: Peptide PGLa-R6 (21 aa).

Position 21 is a leucine amide (Leu21).

Expressed by the skin glands.

It localises to the secreted. Its function is as follows. Antimicrobial peptide. The protein is Peptide PGLa-R6 of Xenopus ruwenzoriensis (Uganda clawed frog).